The following is a 109-amino-acid chain: Death-associated protein-like 1 homolog (109 aa).

2 disordered regions span residues 1-51 (MVQL…KPRS) and 76-100 (FPET…ISRI). Residues 31–50 (KSADENANVEKETRKTDKPR) show a composition bias toward basic and acidic residues.

The protein belongs to the DAP-DAPL1 family. As to quaternary structure, associates with ribosomes; preventing translation. Interacts with eiF5a (eif5a and eif5a2); preventing translation.

Functionally, ribosome-binding protein that promotes ribosome hibernation, a process during which ribosomes are stabilized in an inactive state and preserved from proteasomal degradation. Acts via its association with eiF5a (eif5a and eif5a2) at the polypeptide exit tunnel of the ribosome, preventing mRNA translation. Plays a key role in ribosome hibernation in the mature egg by preventing mRNA translation, leading to ribosome inactivation. Ribosomes, which are produced in large quantities during oogenesis, are stored and translationally repressed in the egg and early embryo. The protein is Death-associated protein-like 1 homolog of Danio rerio (Zebrafish).